The following is a 477-amino-acid chain: Glycogen synthase (477 aa).

Residue K15 coordinates ADP-alpha-D-glucose.

It belongs to the glycosyltransferase 1 family. Bacterial/plant glycogen synthase subfamily.

It carries out the reaction [(1-&gt;4)-alpha-D-glucosyl](n) + ADP-alpha-D-glucose = [(1-&gt;4)-alpha-D-glucosyl](n+1) + ADP + H(+). The protein operates within glycan biosynthesis; glycogen biosynthesis. In terms of biological role, synthesizes alpha-1,4-glucan chains using ADP-glucose. In Salmonella typhimurium (strain LT2 / SGSC1412 / ATCC 700720), this protein is Glycogen synthase (glgA).